Here is a 591-residue protein sequence, read N- to C-terminus: Aspartate--tRNA(Asp/Asn) ligase (591 aa).

Glutamate 174 is an L-aspartate binding site. Residues 198-201 (QLFK) are aspartate. Arginine 220 serves as a coordination point for L-aspartate. ATP is bound by residues 220 to 222 (RDE) and glutamine 229. Histidine 450 lines the L-aspartate pocket. Glutamate 483 serves as a coordination point for ATP. An L-aspartate-binding site is contributed by arginine 490. 535–538 (GLDR) serves as a coordination point for ATP.

The protein belongs to the class-II aminoacyl-tRNA synthetase family. Type 1 subfamily. As to quaternary structure, homodimer.

Its subcellular location is the cytoplasm. It catalyses the reaction tRNA(Asx) + L-aspartate + ATP = L-aspartyl-tRNA(Asx) + AMP + diphosphate. Functionally, aspartyl-tRNA synthetase with relaxed tRNA specificity since it is able to aspartylate not only its cognate tRNA(Asp) but also tRNA(Asn). Reaction proceeds in two steps: L-aspartate is first activated by ATP to form Asp-AMP and then transferred to the acceptor end of tRNA(Asp/Asn). The sequence is that of Aspartate--tRNA(Asp/Asn) ligase from Pseudomonas savastanoi pv. phaseolicola (strain 1448A / Race 6) (Pseudomonas syringae pv. phaseolicola (strain 1448A / Race 6)).